A 116-amino-acid chain; its full sequence is MLTASLLRAVIASICVVSSMAQKVTQAQTEISVVEKEDVTLDCVYETRDTTYYLFWYKQPPSGELVFLIRRNSFDEQNEISGRYSWNFQKSTSSFNFTITASQVVDSAVYFCALSE.

A signal peptide spans 1–21 (MLTASLLRAVIASICVVSSMA). The 95-residue stretch at 22 to 116 (QKVTQAQTEI…SAVYFCALSE (95 aa)) folds into the Ig-like domain. A disulfide bridge links Cys-43 with Cys-112. N-linked (GlcNAc...) asparagine glycosylation is present at Asn-96.

As to quaternary structure, alpha-beta TR is a heterodimer composed of an alpha and beta chain; disulfide-linked. The alpha-beta TR is associated with the transmembrane signaling CD3 coreceptor proteins to form the TR-CD3 (TcR or TCR). The assembly of alpha-beta TR heterodimers with CD3 occurs in the endoplasmic reticulum where a single alpha-beta TR heterodimer associates with one CD3D-CD3E heterodimer, one CD3G-CD3E heterodimer and one CD247 homodimer forming a stable octameric structure. CD3D-CD3E and CD3G-CD3E heterodimers preferentially associate with TR alpha and TR beta chains, respectively. The association of the CD247 homodimer is the last step of TcR assembly in the endoplasmic reticulum and is required for transport to the cell surface.

Its subcellular location is the cell membrane. Its function is as follows. V region of the variable domain of T cell receptor (TR) alpha chain that participates in the antigen recognition. Alpha-beta T cell receptors are antigen specific receptors which are essential to the immune response and are present on the cell surface of T lymphocytes. Recognize peptide-major histocompatibility (MH) (pMH) complexes that are displayed by antigen presenting cells (APC), a prerequisite for efficient T cell adaptive immunity against pathogens. Binding of alpha-beta TR to pMH complex initiates TR-CD3 clustering on the cell surface and intracellular activation of LCK that phosphorylates the ITAM motifs of CD3G, CD3D, CD3E and CD247 enabling the recruitment of ZAP70. In turn ZAP70 phosphorylates LAT, which recruits numerous signaling molecules to form the LAT signalosome. The LAT signalosome propagates signal branching to three major signaling pathways, the calcium, the mitogen-activated protein kinase (MAPK) kinase and the nuclear factor NF-kappa-B (NF-kB) pathways, leading to the mobilization of transcription factors that are critical for gene expression and essential for T cell growth and differentiation. The T cell repertoire is generated in the thymus, by V-(D)-J rearrangement. This repertoire is then shaped by intrathymic selection events to generate a peripheral T cell pool of self-MH restricted, non-autoaggressive T cells. Post-thymic interaction of alpha-beta TR with the pMH complexes shapes TR structural and functional avidity. This is T cell receptor alpha variable 19 from Homo sapiens (Human).